Here is a 594-residue protein sequence, read N- to C-terminus: Trehalase (594 aa).

Positions 1–27 (MDFLNKKIQKILFICILSFLIVNLTKS) are cleaved as a signal peptide. N-linked (GlcNAc...) asparagine glycans are attached at residues N56, N70, N97, and N166. Residues R190, 197 to 198 (WD), and N234 contribute to the substrate site. N242 is a glycosylation site (N-linked (GlcNAc...) asparagine). 243–245 (RSQ) is a binding site for substrate. N261 and N305 each carry an N-linked (GlcNAc...) asparagine glycan. Substrate-binding positions include 312–314 (RPE) and G346. D348 (proton donor/acceptor) is an active-site residue. Residues N361, N395, N513, and N537 are each glycosylated (N-linked (GlcNAc...) asparagine). The active-site Proton donor/acceptor is the E549. E564 lines the substrate pocket.

It belongs to the glycosyl hydrolase 37 family.

The catalysed reaction is alpha,alpha-trehalose + H2O = alpha-D-glucose + beta-D-glucose. The chain is Trehalase (treh) from Dictyostelium discoideum (Social amoeba).